The following is a 59-amino-acid chain: Large ribosomal subunit protein bL33 (59 aa).

Belongs to the bacterial ribosomal protein bL33 family.

This Borrelia turicatae (strain 91E135) protein is Large ribosomal subunit protein bL33.